Here is a 299-residue protein sequence, read N- to C-terminus: Probable lipid kinase YegS (299 aa).

The DAGKc domain occupies 2 to 133; it reads AEFPASLLIL…IDMAQVNKQT (132 aa). ATP-binding positions include T40, 66–72, and T95; that span reads GDGTINE. 3 residues coordinate Mg(2+): L215, D218, and L220. Residue E271 is the Proton acceptor of the active site.

This sequence belongs to the diacylglycerol/lipid kinase family. YegS lipid kinase subfamily. The cofactor is Mg(2+). Ca(2+) is required as a cofactor.

The protein localises to the cytoplasm. Its function is as follows. Probably phosphorylates lipids; the in vivo substrate is unknown. This is Probable lipid kinase YegS from Escherichia coli O127:H6 (strain E2348/69 / EPEC).